A 72-amino-acid chain; its full sequence is Translation initiation factor IF-1 (72 aa).

The S1-like domain occupies 1-72 (MSKQTAIEQD…TKGRISFRYK (72 aa)).

Belongs to the IF-1 family. Component of the 30S ribosomal translation pre-initiation complex which assembles on the 30S ribosome in the order IF-2 and IF-3, IF-1 and N-formylmethionyl-tRNA(fMet); mRNA recruitment can occur at any time during PIC assembly.

It is found in the cytoplasm. Functionally, one of the essential components for the initiation of protein synthesis. Stabilizes the binding of IF-2 and IF-3 on the 30S subunit to which N-formylmethionyl-tRNA(fMet) subsequently binds. Helps modulate mRNA selection, yielding the 30S pre-initiation complex (PIC). Upon addition of the 50S ribosomal subunit IF-1, IF-2 and IF-3 are released leaving the mature 70S translation initiation complex. The polypeptide is Translation initiation factor IF-1 (Porphyromonas gingivalis (strain ATCC BAA-308 / W83)).